A 268-amino-acid polypeptide reads, in one-letter code: Photosystem II 22 kDa protein 1, chloroplastic (268 aa).

A chloroplast-targeting transit peptide spans 1–60 (MAQSMLVSGANGTVAAASTSRLQPVRPTPFSRLVLSQPSSSLGRAVSVKTVALFGRSKTK). Tandem repeats lie at residues 54–161 (FGRS…FVDD) and 164–268 (VTGL…DDEE). Transmembrane regions (helical) follow at residues 99-119 (VAML…KGIL), 133-153 (AEPL…GALG), 199-219 (LFVG…EIIT), and 234-254 (PINE…IAAI).

The protein belongs to the ELIP/psbS family. Expressed at low levels in leaves (at protein level).

The protein resides in the plastid. It localises to the chloroplast thylakoid membrane. Functionally, involved in high light-mediated energy-dependent nonphotochemical quenching (NPQ, qE) and thermal dissipation (TD) thus regulating energy conversion in photosystem II and protecting from photoinhibition. Also seems to regulate quantum yield of electron transport in fluctuating light conditions. The polypeptide is Photosystem II 22 kDa protein 1, chloroplastic (Oryza sativa subsp. indica (Rice)).